The chain runs to 397 residues: MVSSSTIKSLIEKKGKDLPESVKQELYEKLIKYNEKYKLTKAEVETIIDEVVKEYERALVEPGEAVGTVAAQSIGEPSTQMTLNTFHYAGVAEINVTLGLPRIIEIVDARKNPSTPMMTVYLDEEHRYDREKAEEVARRIEGTTLENLARTTTLDLINMEFIVEIDPERLEKSGLTMEKVLKKLQSSFKSAEFEMEGYTLIVRPKKFEKISDLRRLAEKVKKHRLKGLSGVGKTIVRKEGDEYVIYTEGSNFKQVLKVPGVDPTRTKTNNIHEIAEVLGIEAARNAIIEEIMNTMREQGLEVDIRHIMLVADIMTLDGVVRPIGRHGVVGEKASVLARAAFEITVQHLFEAAERGEVDNLSGVIENVLIGQPVPVGTGMVKLTMKLPLRPQKEKEEV.

It belongs to the RNA polymerase beta' chain family. Part of the RNA polymerase complex.

It localises to the cytoplasm. It carries out the reaction RNA(n) + a ribonucleoside 5'-triphosphate = RNA(n+1) + diphosphate. DNA-dependent RNA polymerase (RNAP) catalyzes the transcription of DNA into RNA using the four ribonucleoside triphosphates as substrates. Forms part of the jaw domain. This Pyrococcus abyssi (strain GE5 / Orsay) protein is DNA-directed RNA polymerase subunit Rpo1C.